Consider the following 466-residue polypeptide: Cysteine--tRNA ligase (466 aa).

Position 27 (Cys-27) interacts with Zn(2+). The short motif at 29–39 (PTVYNFFHIGN) is the 'HIGH' region element. Cys-207, His-232, and Glu-236 together coordinate Zn(2+). Positions 264–268 (KMSKS) match the 'KMSKS' region motif. Lys-267 serves as a coordination point for ATP.

This sequence belongs to the class-I aminoacyl-tRNA synthetase family. Monomer. The cofactor is Zn(2+).

It is found in the cytoplasm. The enzyme catalyses tRNA(Cys) + L-cysteine + ATP = L-cysteinyl-tRNA(Cys) + AMP + diphosphate. This Clostridium beijerinckii (strain ATCC 51743 / NCIMB 8052) (Clostridium acetobutylicum) protein is Cysteine--tRNA ligase.